A 370-amino-acid chain; its full sequence is Homoserine kinase (370 aa).

The transit peptide at 1–34 directs the protein to the chloroplast; the sequence is MASLCFQSPSKPISYFQPKSNPSPPLFAKVSVFR. 143–154 lines the ATP pocket; it reads LPLGSGLGSSAA.

This sequence belongs to the GHMP kinase family. Homoserine kinase subfamily.

Its subcellular location is the plastid. It localises to the chloroplast stroma. The catalysed reaction is L-homoserine + ATP = O-phospho-L-homoserine + ADP + H(+). The protein operates within amino-acid biosynthesis; L-threonine biosynthesis; L-threonine from L-aspartate: step 4/5. Functionally, catalyzes the ATP-dependent phosphorylation of L-homoserine to L-homoserine phosphate. Is specific for L-homoserine and cannot use other substrates such D-serine, L-serine, D-threonine and L-threonine, galactose or D-homoserine in vitro. Required for susceptibility to the downy mildew pathogen Hyaloperonospora parasitica. The polypeptide is Homoserine kinase (HSK) (Arabidopsis thaliana (Mouse-ear cress)).